Reading from the N-terminus, the 405-residue chain is Tyrosine--tRNA ligase (405 aa).

The 'HIGH' region signature appears at 48–57 (PTAPDLHLGH). The 'KMSKS' region motif lies at 232–236 (KMSKS). Lys235 contributes to the ATP binding site. An S4 RNA-binding domain is found at 343-404 (IWLPKLLADA…GKRRFVKVIF (62 aa)).

Belongs to the class-I aminoacyl-tRNA synthetase family. TyrS type 2 subfamily. In terms of assembly, homodimer.

The protein resides in the cytoplasm. It catalyses the reaction tRNA(Tyr) + L-tyrosine + ATP = L-tyrosyl-tRNA(Tyr) + AMP + diphosphate + H(+). Catalyzes the attachment of tyrosine to tRNA(Tyr) in a two-step reaction: tyrosine is first activated by ATP to form Tyr-AMP and then transferred to the acceptor end of tRNA(Tyr). The sequence is that of Tyrosine--tRNA ligase from Desulfotalea psychrophila (strain LSv54 / DSM 12343).